Here is a 1142-residue protein sequence, read N- to C-terminus: Protein kinase C-like (1142 aa).

One can recognise an REM-1 1 domain in the interval 1-67 (MNDEDKVHDI…LRELQMRRLG (67 aa)). Residues 70–139 (VDNMSLGASP…PPDSNVPRAR (70 aa)) form a disordered region. One can recognise an REM-1 2 domain in the interval 149–226 (KFDTPHLGPR…LKRYEELHID (78 aa)). Positions 231–349 (GPDDDSINLP…LRRKKIEAEM (119 aa)) constitute a C2 domain. The tract at residues 357–403 (ADRVGSRAPPPQFPMGAQSPQFAAPPTSPGSQEQNTMIPPQAPPPSQ) is disordered. The span at 385 to 394 (PGSQEQNTMI) shows a compositional bias: polar residues. 2 Phorbol-ester/DAG-type zinc fingers span residues 457 to 505 (GHKF…VTKC) and 525 to 576 (PHRF…PDFC). 2 disordered regions span residues 592–622 (TQKK…SGSI) and 651–807 (SQTT…TDPG). A compositionally biased stretch (polar residues) spans 613–622 (SKTSISSGSI). 3 stretches are compositionally biased toward low complexity: residues 663-677 (TSTS…AAAA), 712-724 (SAQQ…SPQQ), and 741-765 (PQAR…MYQQ). One can recognise a Protein kinase domain in the interval 817-1076 (FNFLAVLGKG…AQEIMSQPFF (260 aa)). ATP is bound by residues 823–831 (LGKGNFGKV) and Lys-846. The active-site Proton acceptor is the Asp-942. The region spanning 1077–1142 (RNINWDDIYH…RGFSYTADFE (66 aa)) is the AGC-kinase C-terminal domain.

Belongs to the protein kinase superfamily. AGC Ser/Thr protein kinase family. PKC subfamily.

It carries out the reaction L-seryl-[protein] + ATP = O-phospho-L-seryl-[protein] + ADP + H(+). It catalyses the reaction L-threonyl-[protein] + ATP = O-phospho-L-threonyl-[protein] + ADP + H(+). This chain is Protein kinase C-like, found in Neurospora crassa (strain ATCC 24698 / 74-OR23-1A / CBS 708.71 / DSM 1257 / FGSC 987).